Consider the following 276-residue polypeptide: UPF0276 protein CV_3513 (276 aa).

This sequence belongs to the UPF0276 family.

The sequence is that of UPF0276 protein CV_3513 from Chromobacterium violaceum (strain ATCC 12472 / DSM 30191 / JCM 1249 / CCUG 213 / NBRC 12614 / NCIMB 9131 / NCTC 9757 / MK).